Reading from the N-terminus, the 172-residue chain is S-ribosylhomocysteine lyase (172 aa).

Fe cation contacts are provided by His54, His58, and Cys128.

Belongs to the LuxS family. In terms of assembly, homodimer. Requires Fe cation as cofactor.

It carries out the reaction S-(5-deoxy-D-ribos-5-yl)-L-homocysteine = (S)-4,5-dihydroxypentane-2,3-dione + L-homocysteine. Involved in the synthesis of autoinducer 2 (AI-2) which is secreted by bacteria and is used to communicate both the cell density and the metabolic potential of the environment. The regulation of gene expression in response to changes in cell density is called quorum sensing. Catalyzes the transformation of S-ribosylhomocysteine (RHC) to homocysteine (HC) and 4,5-dihydroxy-2,3-pentadione (DPD). This Aliivibrio salmonicida (strain LFI1238) (Vibrio salmonicida (strain LFI1238)) protein is S-ribosylhomocysteine lyase.